A 221-amino-acid chain; its full sequence is 3-phospho-D-glycerate guanylyltransferase (221 aa).

Belongs to the CofC family.

It catalyses the reaction (2R)-3-phosphoglycerate + GTP + H(+) = 3-[(R)-glyceryl]-diphospho-5'-guanosine + diphosphate. It carries out the reaction (2S)-2-phospholactate + GTP + H(+) = (2S)-lactyl-2-diphospho-5'-guanosine + diphosphate. Its pathway is cofactor biosynthesis; coenzyme F420 biosynthesis. In terms of biological role, guanylyltransferase that catalyzes the activation of (2R)-3-phosphoglycerate (3PG) as 3-[(R)-glyceryl]-diphospho-5'-guanosine, via the condensation of 3PG with GTP. It is involved in the biosynthesis of a derivative of the hydride carrier cofactor coenzyme F420, 3PG-F420. Can also use (2S)-2-phospholactate (2-PL), with lower turnover, and has weak activity with phosphoenolpyruvate (PEP). In Mycetohabitans rhizoxinica (strain DSM 19002 / CIP 109453 / HKI 454) (Paraburkholderia rhizoxinica), this protein is 3-phospho-D-glycerate guanylyltransferase.